Consider the following 1374-residue polypeptide: Y' element ATP-dependent helicase YLL067C (1374 aa).

The disordered stretch occupies residues 321-345 (AGEAASSDHDQKISRVTRKRPREPK). A Helicase ATP-binding domain is found at 375–552 (EIYMADTPSV…LQRIGLTGLA (178 aa)). 388 to 395 (APPGYGKT) is an ATP binding site. A DEAH box motif is present at residues 498 to 501 (DEFH). Residues 609–758 (KLLLALFEIE…EFYGLESKKG (150 aa)) enclose the Helicase C-terminal domain. Residues 832 to 1011 (ANASTNATTN…ATTTESTNAS (180 aa)) show a composition bias toward low complexity. A disordered region spans residues 832 to 1035 (ANASTNATTN…RFHPVTDINK (204 aa)). Over residues 1012 to 1035 (AKEDANKDGNAEDNRFHPVTDINK) the composition is skewed to basic and acidic residues.

It belongs to the helicase family. Yeast subtelomeric Y' repeat subfamily.

Its function is as follows. Catalyzes DNA unwinding and is involved in telomerase-independent telomere maintenance. This Saccharomyces cerevisiae (strain ATCC 204508 / S288c) (Baker's yeast) protein is Y' element ATP-dependent helicase YLL067C.